Reading from the N-terminus, the 139-residue chain is Membrane protein YqfB (139 aa).

A helical membrane pass occupies residues 3 to 23 (DLLTNPLIIAAIIGIISAIFG). Positions 25 to 87 (KSKEEKQNSQ…TARNLKGLER (63 aa)) are disordered. Residues 62–97 (NRMEQARREAEERRRETARNLKGLERDLAAAKQKTV) are a coiled coil. Residues 65 to 87 (EQARREAEERRRETARNLKGLER) are compositionally biased toward basic and acidic residues.

The protein localises to the cell membrane. The polypeptide is Membrane protein YqfB (yqfB) (Bacillus subtilis (strain 168)).